We begin with the raw amino-acid sequence, 362 residues long: MTTLMGSYSWTEGLDCSPIDEDLSDGLSPHRSPREKGSETRIRRPMNAFMVWAKDERKRLAVQNPDLHNAELSKMLGKSWKALSPAQKRPYVEEAERLRVQHMQDYPNYKYRPRRKKQIKRICKRVDTGFLLSSLSRDQNSVPDTRGCRTAVEKEENGGYPGSALPDMRHYRETPSNGSKHDQTYPYGLPTPPEMSPLEAIDQDQSFYSTPCSEDCHPHINGAVYEYSSRSPILCSHLSQVPIPQTGSSMIPPVPNCPPAYYSSTYHSIHHNYHAHLGQLSPPPEHPHYDAIDQISQAELLGDMDRNEFDQYLNTSLHDPSEMTIHGHVQVSQASDIQPSETSLISVLADATATYYNSYSVS.

The disordered stretch occupies residues 21-41 (EDLSDGLSPHRSPREKGSETR). A compositionally biased stretch (basic and acidic residues) spans 32–41 (SPREKGSETR). The HMG box DNA-binding region spans 42–110 (IRRPMNAFMV…QHMQDYPNYK (69 aa)). Residues 245 to 362 (QTGSSMIPPV…ATYYNSYSVS (118 aa)) form the Sox C-terminal domain.

Expressed in the embryonic pronephric sinus as well as posterior cardinal veins.

The protein localises to the nucleus. Transcription factor. Binds to the DNA sequence 5'-AACAAT-3'. Acts downstream of vegt and upstream of nodal signaling to promote endodermal and mesodermal differentiation by promoting vegt-induced expression of both endodermal genes (including endodermin) and mesodermal genes (including snai1/snail and snai2/slug). Induces expression of multiple nodal genes (including nodal, nodal2, nodal4, nodal5 and nodal6) and binds directly to sites within the promoter of the nodal5 gene. The endodermal and mesodermal specification pathways then interact to initiate cardiogenesis. Acts partially redundantly with sox18 during cardiogenesis. Also acts as an antagonist of beta-catenin signaling. Regulates (possibly indirectly) development of the pronephros, the functional larval kidney. The sequence is that of Transcription factor Sox-7 from Xenopus tropicalis (Western clawed frog).